Here is a 359-residue protein sequence, read N- to C-terminus: 3-dehydroquinate synthase (359 aa).

NAD(+)-binding positions include 71-76, 105-109, 129-130, Lys-142, Lys-151, and 169-172; these read DGEQFK, GVIGD, TT, and CLQT. Glu-184, His-247, and His-264 together coordinate Zn(2+).

It belongs to the sugar phosphate cyclases superfamily. Dehydroquinate synthase family. Requires Co(2+) as cofactor. Zn(2+) serves as cofactor. It depends on NAD(+) as a cofactor.

The protein localises to the cytoplasm. It catalyses the reaction 7-phospho-2-dehydro-3-deoxy-D-arabino-heptonate = 3-dehydroquinate + phosphate. It participates in metabolic intermediate biosynthesis; chorismate biosynthesis; chorismate from D-erythrose 4-phosphate and phosphoenolpyruvate: step 2/7. Functionally, catalyzes the conversion of 3-deoxy-D-arabino-heptulosonate 7-phosphate (DAHP) to dehydroquinate (DHQ). This Shewanella sp. (strain ANA-3) protein is 3-dehydroquinate synthase.